Consider the following 223-residue polypeptide: N-terminal Xaa-Pro-Lys N-methyltransferase 1 (223 aa).

Met-1 carries the post-translational modification N-acetylmethionine. An N-acetylthreonine; in N-terminal Xaa-Pro-Lys N-methyltransferase 1, N-terminally processed modification is found at Thr-2. S-adenosyl-L-methionine-binding positions include Gly-69, Arg-74, 91-93 (DIT), 119-120 (LQ), and Gln-135.

It belongs to the methyltransferase superfamily. NTM1 family.

The protein localises to the nucleus. The enzyme catalyses N-terminal L-alanyl-L-prolyl-L-lysyl-[protein] + 3 S-adenosyl-L-methionine = N-terminal N,N,N-trimethyl-L-alanyl-L-prolyl-L-lysyl-[protein] + 3 S-adenosyl-L-homocysteine + 3 H(+). It carries out the reaction N-terminal L-seryl-L-prolyl-L-lysyl-[protein] + 3 S-adenosyl-L-methionine = N-terminal N,N,N-trimethyl-L-seryl-L-prolyl-L-lysyl-[protein] + 3 S-adenosyl-L-homocysteine + 3 H(+). The catalysed reaction is N-terminal L-prolyl-L-prolyl-L-lysyl-[protein] + 2 S-adenosyl-L-methionine = N-terminal N,N-dimethyl-L-prolyl-L-prolyl-L-lysyl-[protein] + 2 S-adenosyl-L-homocysteine + 2 H(+). In terms of biological role, distributive alpha-N-methyltransferase that methylates the N-terminus of target proteins containing the N-terminal motif [Ala/Gly/Pro/Ser]-Pro-Lys when the initiator Met is cleaved. Specifically catalyzes mono-, di- or tri-methylation of the exposed alpha-amino group of the Ala, Gly or Ser residue in the [Ala/Gly/Ser]-Pro-Lys motif and mono- or di-methylation of Pro in the Pro-Pro-Lys motif. Some of the substrates may be primed by NTMT2-mediated monomethylation. Catalyzes the trimethylation of the N-terminal Gly in CENPA (after removal of Met-1). Responsible for the N-terminal methylation of KLHL31, MYL2, MYL3, RB1, RCC1, RPL23A and SET. Required during mitosis for normal bipolar spindle formation and chromosome segregation via its action on RCC1. This chain is N-terminal Xaa-Pro-Lys N-methyltransferase 1 (NTMT1), found in Homo sapiens (Human).